A 311-amino-acid polypeptide reads, in one-letter code: Cadmium, cobalt and zinc/H(+)-K(+) antiporter (311 aa).

At 1 to 12 (MGHNHNEGANKK) the chain is on the extracellular side. The helical transmembrane segment at 13 to 33 (VLLISFIMITGYMIIEAIGGF) threads the bilayer. Over 34 to 43 (LTNSLALLSD) the chain is Cytoplasmic. The helical transmembrane segment at 44–64 (AGHMLSDSISLMVALIAFTLA) threads the bilayer. The Extracellular segment spans residues 65–78 (EKKANHNKTFGYKR). A helical membrane pass occupies residues 79-99 (FEILAAVINGAALILISLYII). Topologically, residues 100–115 (YEAIERFSNPPKVATT) are cytoplasmic. The helical transmembrane segment at 116 to 136 (GMLTISIIGLVVNLLVAWIMM) threads the bilayer. The Extracellular portion of the chain corresponds to 137–157 (SGGDTKNNLNIRGAYLHVISD). The chain crosses the membrane as a helical span at residues 158 to 178 (MLGSVGAILAAILIIFFGWGW). Residues 179 to 311 (ADPLASIIVA…MEKQRDHHHH (133 aa)) lie on the Cytoplasmic side of the membrane.

The protein belongs to the cation diffusion facilitator (CDF) transporter (TC 2.A.4) family. SLC30A subfamily.

It localises to the cell membrane. Functionally, involved in divalent cation and potassium homeostasis in the cell. Catalyzes the active efflux of zinc, cadmium and cobalt, in exchange for potassium and H(+) ions. The sequence is that of Cadmium, cobalt and zinc/H(+)-K(+) antiporter (czcD) from Bacillus subtilis (strain 168).